Here is a 128-residue protein sequence, read N- to C-terminus: Sirohydrochlorin cobaltochelatase (128 aa).

His9 functions as the Proton acceptor in the catalytic mechanism. A Co(2+)-binding site is contributed by His9. Residues Lys43 and 68-73 (FATGTH) each bind substrate. Co(2+) is bound at residue His73.

The protein belongs to the CbiX family. CbiXS subfamily. Homotetramer; dimer of dimers.

It catalyses the reaction Co-sirohydrochlorin + 2 H(+) = sirohydrochlorin + Co(2+). It participates in cofactor biosynthesis; adenosylcobalamin biosynthesis; cob(II)yrinate a,c-diamide from sirohydrochlorin (anaerobic route): step 1/10. Functionally, catalyzes the insertion of Co(2+) into sirohydrochlorin as part of the anaerobic pathway to cobalamin biosynthesis. This is Sirohydrochlorin cobaltochelatase from Saccharolobus islandicus (strain Y.G.57.14 / Yellowstone #1) (Sulfolobus islandicus).